The following is a 449-amino-acid chain: UDP-N-acetylmuramoylalanine--D-glutamate ligase (449 aa).

Residue 118–124 (GTNGKTT) participates in ATP binding.

This sequence belongs to the MurCDEF family.

The protein localises to the cytoplasm. It catalyses the reaction UDP-N-acetyl-alpha-D-muramoyl-L-alanine + D-glutamate + ATP = UDP-N-acetyl-alpha-D-muramoyl-L-alanyl-D-glutamate + ADP + phosphate + H(+). It participates in cell wall biogenesis; peptidoglycan biosynthesis. Functionally, cell wall formation. Catalyzes the addition of glutamate to the nucleotide precursor UDP-N-acetylmuramoyl-L-alanine (UMA). The protein is UDP-N-acetylmuramoylalanine--D-glutamate ligase of Staphylococcus aureus (strain MW2).